The following is a 3977-amino-acid chain: Hybrid PKS-NRPS synthetase gkaA (3977 aa).

One can recognise a Ketosynthase family 3 (KS3) domain in the interval 4 to 441 (EEPIAVIGSG…GTNAHVILEN (438 aa)). Active-site for beta-ketoacyl synthase activity residues include Cys177, His316, and His361. Residues 551-867 (VFTGQGAQWP…TGVIHRGKND (317 aa)) form the Malonyl-CoA:ACP transacylase (MAT) domain. Residues 937 to 1072 (NPLLGTRTTD…GRITVTLGES (136 aa)) form an N-terminal hotdog fold region. In terms of domain architecture, PKS/mFAS DH spans 937–1241 (NPLLGTRTTD…VVAFSEATAD (305 aa)). The active-site Proton acceptor; for dehydratase activity is the His969. Positions 1087 to 1241 (LVSIPQDRFY…VVAFSEATAD (155 aa)) are C-terminal hotdog fold. The active-site Proton donor; for dehydratase activity is the Asp1147. The methyltransferase (cMeT) domain stretch occupies residues 1286–1580 (YMKKTVEEFP…FSGIDSSTPE (295 aa)). Residues 2128-2301 (TYVLFGLTSD…AASILHIGAV (174 aa)) form the Ketoreductase (KR) domain. Positions 2409–2490 (SEVFEIISGA…QLLEYAIDNM (82 aa)) constitute a Carrier 1 domain. An O-(pantetheine 4'-phosphoryl)serine modification is found at Ser2450. A disordered region spans residues 2497-2542 (HSNGEQGTVSDSGSTNIQLTPASTPSVPSVNLASDSTGSSQVGEDV). Residues 2499–2538 (NGEQGTVSDSGSTNIQLTPASTPSVPSVNLASDSTGSSQV) are compositionally biased toward polar residues. The segment at 2584-3018 (EKIIPMSPGQ…LKDISLFSKE (435 aa)) is condensation. The interval 3048-3437 (IAEHPDTISI…GALEILGRID (390 aa)) is adenylation. The 81-residue stretch at 3552–3632 (FSLTPTEDKL…AMASLITPAS (81 aa)) folds into the Carrier 2 domain. The residue at position 3592 (Ser3592) is an O-(pantetheine 4'-phosphoryl)serine. Positions 3672–3890 (LTGATGFLGH…FVDLVSVQNV (219 aa)) constitute a Thioester reductase (TE) domain.

In the C-terminal section; belongs to the NRP synthetase family. The cofactor is pantetheine 4'-phosphate.

Its pathway is mycotoxin biosynthesis. Hybrid PKS-NRPS synthetase; part of the gene cluster that mediates the biosynthesis of GKK1032, fungal natural products containing a macrocyclic para-cyclophane connected to a decahydrofluorene ring system that show potent antitumor activities. Within the pathway, the PKS-NRPS gkaA, with the help of the trans-enoyl reductase gkaC, synthesize the polyketide-tyrosyl acyl thioester product which can be reductively off-loaded by the terminal reductase (R) domain in gkaA. The PKS module of gkaA acts in combination with the trans-acting enoyl reductase gkaC to produce a methylated polyketide attached to the ACP domain. In parallel, the adenylation (A) domain of the NRPS module activated L-tyrosine, which is then transferred to the ACP domain. The condensation (C) domain subsequently links this group to the polyketide chain, forming an enzyme-bound amide. The alpha/beta hydrolase gkaG is then required to catalyze the subsequent Knoevenagel condensation that affords the 3-pyrrolin-2-one ring, whereas the three proteins gkaB, gkadX and gkaZ then function synergistically to form the cyclophane. This chain is Hybrid PKS-NRPS synthetase gkaA, found in Penicillium citrinum.